A 462-amino-acid chain; its full sequence is tRNA modification GTPase MnmE (462 aa).

The (6S)-5-formyl-5,6,7,8-tetrahydrofolate site is built by R34, E92, and K131. A TrmE-type G domain is found at 227–386 (GLQVVIAGKP…LIDAITAHAG (160 aa)). Position 237 (N237) interacts with K(+). GTP-binding positions include 237-242 (NAGKSS), 256-262 (TDIAGTT), and 281-284 (DTAG). S241 is a binding site for Mg(2+). T256, I258, and T261 together coordinate K(+). T262 lines the Mg(2+) pocket. K462 is a (6S)-5-formyl-5,6,7,8-tetrahydrofolate binding site.

This sequence belongs to the TRAFAC class TrmE-Era-EngA-EngB-Septin-like GTPase superfamily. TrmE GTPase family. In terms of assembly, homodimer. Heterotetramer of two MnmE and two MnmG subunits. It depends on K(+) as a cofactor.

It localises to the cytoplasm. Its function is as follows. Exhibits a very high intrinsic GTPase hydrolysis rate. Involved in the addition of a carboxymethylaminomethyl (cmnm) group at the wobble position (U34) of certain tRNAs, forming tRNA-cmnm(5)s(2)U34. This chain is tRNA modification GTPase MnmE, found in Acinetobacter baylyi (strain ATCC 33305 / BD413 / ADP1).